A 358-amino-acid polypeptide reads, in one-letter code: Glycerophosphodiester phosphodiesterase, periplasmic (358 aa).

The N-terminal stretch at 1-25 (MKLTLKNLSMAIMMSTIVMGSSAMA) is a signal peptide. Residues 31–355 (KIVIAHRGAS…DFPDKAVKFL (325 aa)) form the GP-PDE domain. Histidine 36 acts as the Proton acceptor in catalysis. 2 residues coordinate Ca(2+): glutamate 63 and aspartate 65. Residue histidine 78 is the Proton donor of the active site. Glutamate 171 lines the Ca(2+) pocket.

It belongs to the glycerophosphoryl diester phosphodiesterase family. Homodimer. Ca(2+) is required as a cofactor.

The protein resides in the periplasm. It carries out the reaction a sn-glycero-3-phosphodiester + H2O = an alcohol + sn-glycerol 3-phosphate + H(+). Functionally, glycerophosphodiester phosphodiesterase hydrolyzes glycerophosphodiesters into glycerol-3-phosphate (G3P) and the corresponding alcohol. This Escherichia coli (strain K12) protein is Glycerophosphodiester phosphodiesterase, periplasmic (glpQ).